A 630-amino-acid chain; its full sequence is tRNA uridine 5-carboxymethylaminomethyl modification enzyme MnmG (630 aa).

Residue 13-18 (GGGHAG) coordinates FAD. 273-287 (GPRYCPSIEDKIHRF) serves as a coordination point for NAD(+).

Belongs to the MnmG family. In terms of assembly, homodimer. Heterotetramer of two MnmE and two MnmG subunits. FAD serves as cofactor.

The protein localises to the cytoplasm. NAD-binding protein involved in the addition of a carboxymethylaminomethyl (cmnm) group at the wobble position (U34) of certain tRNAs, forming tRNA-cmnm(5)s(2)U34. This is tRNA uridine 5-carboxymethylaminomethyl modification enzyme MnmG from Pseudomonas entomophila (strain L48).